The following is a 148-amino-acid chain: 3-hydroxyacyl-[acyl-carrier-protein] dehydratase FabZ (148 aa).

The active site involves His48.

This sequence belongs to the thioester dehydratase family. FabZ subfamily.

Its subcellular location is the cytoplasm. It carries out the reaction a (3R)-hydroxyacyl-[ACP] = a (2E)-enoyl-[ACP] + H2O. In terms of biological role, involved in unsaturated fatty acids biosynthesis. Catalyzes the dehydration of short chain beta-hydroxyacyl-ACPs and long chain saturated and unsaturated beta-hydroxyacyl-ACPs. The chain is 3-hydroxyacyl-[acyl-carrier-protein] dehydratase FabZ from Campylobacter curvus (strain 525.92).